The primary structure comprises 308 residues: Aspartate carbamoyltransferase catalytic subunit (308 aa).

Residues Arg-55 and Thr-56 each contribute to the carbamoyl phosphate site. Lys-83 contacts L-aspartate. Carbamoyl phosphate-binding residues include Arg-105, His-133, and Gln-136. L-aspartate is bound by residues Arg-166 and Arg-223. Residues Gly-264 and Pro-265 each coordinate carbamoyl phosphate.

The protein belongs to the aspartate/ornithine carbamoyltransferase superfamily. ATCase family. In terms of assembly, heterododecamer (2C3:3R2) of six catalytic PyrB chains organized as two trimers (C3), and six regulatory PyrI chains organized as three dimers (R2).

The catalysed reaction is carbamoyl phosphate + L-aspartate = N-carbamoyl-L-aspartate + phosphate + H(+). The protein operates within pyrimidine metabolism; UMP biosynthesis via de novo pathway; (S)-dihydroorotate from bicarbonate: step 2/3. Its function is as follows. Catalyzes the condensation of carbamoyl phosphate and aspartate to form carbamoyl aspartate and inorganic phosphate, the committed step in the de novo pyrimidine nucleotide biosynthesis pathway. This is Aspartate carbamoyltransferase catalytic subunit from Salinispora arenicola (strain CNS-205).